The sequence spans 78 residues: Large ribosomal subunit protein bL28 (78 aa).

The protein belongs to the bacterial ribosomal protein bL28 family.

This chain is Large ribosomal subunit protein bL28, found in Prochlorococcus marinus (strain MIT 9303).